A 192-amino-acid chain; its full sequence is Photosystem I assembly protein Ycf4 (192 aa).

The next 2 helical transmembrane spans lie at Tyr-30–Leu-52 and Ile-72–Trp-94.

Belongs to the Ycf4 family.

It is found in the cellular thylakoid membrane. Seems to be required for the assembly of the photosystem I complex. This chain is Photosystem I assembly protein Ycf4, found in Thermosynechococcus vestitus (strain NIES-2133 / IAM M-273 / BP-1).